Here is a 130-residue protein sequence, read N- to C-terminus: Small ribosomal subunit protein uS9 (130 aa).

It belongs to the universal ribosomal protein uS9 family.

This chain is Small ribosomal subunit protein uS9, found in Aeromonas salmonicida (strain A449).